The sequence spans 235 residues: Carboxymethylenebutenolidase 2 (235 aa).

Residues cysteine 117, aspartate 173, and histidine 204 contribute to the active site.

It belongs to the dienelactone hydrolase family. In terms of assembly, monomer.

It carries out the reaction 2-(5-oxo-2,5-dihydrofuran-2-ylidene)acetate + H2O = 4-oxohex-2-enedioate + H(+). The protein operates within aromatic compound metabolism; 3-chlorocatechol degradation. Ring cleavage of cyclic ester dienelactone to produce maleylacetate. The chain is Carboxymethylenebutenolidase 2 (tfdEII) from Cupriavidus pinatubonensis (strain JMP 134 / LMG 1197) (Cupriavidus necator (strain JMP 134)).